A 245-amino-acid polypeptide reads, in one-letter code: Heavy metal-associated isoprenylated plant protein 1 (245 aa).

Positions 28–92 (PVHVVLKIDF…KLQKKSKKKV (65 aa)) constitute an HMA 1 domain. Positions 39 and 42 each coordinate a metal cation. The disordered stretch occupies residues 91-113 (KVELISPKPKKDTKENNEKKAND). A compositionally biased stretch (basic and acidic residues) spans 99-113 (PKKDTKENNEKKAND). In terms of domain architecture, HMA 2 spans 121–188 (VTTVVLKVNC…KLKKTVQVVP (68 aa)). A metal cation contacts are provided by Cys-132 and Cys-135. Cysteine methyl ester is present on Cys-242. Cys-242 carries S-farnesyl cysteine lipidation. Positions 243 to 245 (SVM) are cleaved as a propeptide — removed in mature form.

This sequence belongs to the HIPP family.

In terms of biological role, heavy-metal-binding protein. The sequence is that of Heavy metal-associated isoprenylated plant protein 1 from Arabidopsis thaliana (Mouse-ear cress).